Reading from the N-terminus, the 260-residue chain is 4-hydroxy-tetrahydrodipicolinate reductase (260 aa).

NAD(+)-binding positions include 12 to 17 (GFRGKM), 92 to 94 (GTT), and 118 to 121 (APNF). Histidine 148 functions as the Proton donor/acceptor in the catalytic mechanism. (S)-2,3,4,5-tetrahydrodipicolinate is bound at residue histidine 149. Lysine 152 functions as the Proton donor in the catalytic mechanism. Residue 158 to 159 (GT) coordinates (S)-2,3,4,5-tetrahydrodipicolinate.

This sequence belongs to the DapB family.

Its subcellular location is the cytoplasm. The catalysed reaction is (S)-2,3,4,5-tetrahydrodipicolinate + NAD(+) + H2O = (2S,4S)-4-hydroxy-2,3,4,5-tetrahydrodipicolinate + NADH + H(+). The enzyme catalyses (S)-2,3,4,5-tetrahydrodipicolinate + NADP(+) + H2O = (2S,4S)-4-hydroxy-2,3,4,5-tetrahydrodipicolinate + NADPH + H(+). It functions in the pathway amino-acid biosynthesis; L-lysine biosynthesis via DAP pathway; (S)-tetrahydrodipicolinate from L-aspartate: step 4/4. Catalyzes the conversion of 4-hydroxy-tetrahydrodipicolinate (HTPA) to tetrahydrodipicolinate. The sequence is that of 4-hydroxy-tetrahydrodipicolinate reductase from Lactococcus lactis subsp. cremoris (strain MG1363).